We begin with the raw amino-acid sequence, 52 residues long: Conotoxin Cal6.25 (52 aa).

A signal peptide spans 1–22 (MKLTHVLIVAVLVLTVCHLTMA). Cystine bridges form between Cys24/Cys41, Cys31/Cys45, and Cys40/Cys50.

In terms of tissue distribution, expressed by the venom duct.

The protein resides in the secreted. In terms of biological role, probable neurotoxin. This chain is Conotoxin Cal6.25, found in Californiconus californicus (California cone).